Consider the following 423-residue polypeptide: Histidine--tRNA ligase (423 aa).

This sequence belongs to the class-II aminoacyl-tRNA synthetase family. Homodimer.

It localises to the cytoplasm. It catalyses the reaction tRNA(His) + L-histidine + ATP = L-histidyl-tRNA(His) + AMP + diphosphate + H(+). The sequence is that of Histidine--tRNA ligase from Shewanella loihica (strain ATCC BAA-1088 / PV-4).